The sequence spans 245 residues: Terpene cyclase prhH (245 aa).

The next 7 membrane-spanning stretches (helical) occupy residues 17–37, 51–71, 76–96, 113–133, 138–158, 170–190, and 205–225; these read ILAI…VNYI, IGIL…WMFP, HWQG…LVTL, IVFI…ALAA, ALGF…CGIA, SYLI…KLCI, and PMCW…PFLY.

This sequence belongs to the paxB family.

Its subcellular location is the membrane. The protein operates within secondary metabolite biosynthesis; terpenoid biosynthesis. In terms of biological role, terpene cyclase; part of the gene cluster that mediates the biosynthesis of paraherquonin, a meroterpenoid with a unique, highly congested hexacyclic molecular architecture. The first step of the pathway is the synthesis of 3,5-dimethylorsellinic acid (DMOA) by the polyketide synthase prhL. Synthesis of DMOA is followed by farnesylation by the prenyltransferase prhE, methylesterification by the methyl-transferase prhM, epoxidation of the prenyl chain by the flavin-dependent monooxygenase prhF, and cyclization of the farnesyl moiety by the terpene cyclase prhH, to yield the tetracyclic intermediate, protoaustinoid A. The short chain dehydrogenase prhI then oxidizes the C-3 alcohol group of the terpene cyclase product to transform protoaustinoid A into protoaustinoid B. The FAD-binding monooxygenase prhJ catalyzes the oxidation of protoaustinoid B into preaustinoid A which is further oxidized into preaustinoid A1 by FAD-binding monooxygenase phrK. Finally, prhA leads to berkeleydione via the berkeleyone B intermediate. PrhA is a multifunctional dioxygenase that first desaturates at C5-C6 to form berkeleyone B, followed by rearrangement of the A/B-ring to form the cycloheptadiene moiety in berkeleydione. Berkeleydione serves as the key intermediate for the biosynthesis of paraherquonin as well as many other meroterpenoids. The cytochrome P450 monooxygenases prhB, prhD, and prhN, as well as the isomerase prhC, are probably involved in the late stage of paraherquonin biosynthesis, after the production of berkeleydione. Especially prhC might be a multifunctional enzyme that catalyzes the D-ring expansion via intramolecular methoxy rearrangement, as well as the hydrolysis of the expanded D-ring. The polypeptide is Terpene cyclase prhH (Penicillium brasilianum).